A 157-amino-acid chain; its full sequence is Small ribosomal subunit protein bS16 (157 aa).

Basic and acidic residues predominate over residues 125–141 (KRKAAKKAAEEAAAKEA). The tract at residues 125-157 (KRKAAKKAAEEAAAKEAEAEEAAEDKAEEESAE) is disordered. The span at 142-157 (EAEEAAEDKAEEESAE) shows a compositional bias: acidic residues.

The protein belongs to the bacterial ribosomal protein bS16 family.

The sequence is that of Small ribosomal subunit protein bS16 from Corynebacterium kroppenstedtii (strain DSM 44385 / JCM 11950 / CIP 105744 / CCUG 35717).